Here is a 113-residue protein sequence, read N- to C-terminus: MEAKAIARYVRISPRKVRLVVDLIRGKSLEEARNILRYTNKRGAYFVAKVLESAAANAVNNHDMLEDRLYVKAAYVDEGPALKRVLPRARGRADIIKKRTSHITVILGEKHGK.

This sequence belongs to the universal ribosomal protein uL22 family. As to quaternary structure, part of the 50S ribosomal subunit.

In terms of biological role, this protein binds specifically to 23S rRNA; its binding is stimulated by other ribosomal proteins, e.g. L4, L17, and L20. It is important during the early stages of 50S assembly. It makes multiple contacts with different domains of the 23S rRNA in the assembled 50S subunit and ribosome. Functionally, the globular domain of the protein is located near the polypeptide exit tunnel on the outside of the subunit, while an extended beta-hairpin is found that lines the wall of the exit tunnel in the center of the 70S ribosome. The polypeptide is Large ribosomal subunit protein uL22 (Thermus thermophilus (strain ATCC BAA-163 / DSM 7039 / HB27)).